A 178-amino-acid chain; its full sequence is Actin-related protein 2/3 complex subunit 3-A (178 aa).

The protein belongs to the ARPC3 family. Component of the Arp2/3 complex composed of actr2/arp2, actr3/arp3, arpc1 (arpc1a or arpc1b), arpc2, arpc3, arpc4 and arpc5.

Its subcellular location is the cytoplasm. The protein resides in the cytoskeleton. It is found in the cell projection. The protein localises to the nucleus. Its function is as follows. Component of the Arp2/3 complex, a multiprotein complex that mediates actin polymerization upon stimulation by nucleation-promoting factor (NPF). The Arp2/3 complex mediates the formation of branched actin networks in the cytoplasm, providing the force for cell motility. In addition to its role in the cytoplasmic cytoskeleton, the Arp2/3 complex also promotes actin polymerization in the nucleus, thereby regulating gene transcription and repair of damaged DNA. The Arp2/3 complex promotes homologous recombination (HR) repair in response to DNA damage by promoting nuclear actin polymerization, leading to drive motility of double-strand breaks (DSBs). The protein is Actin-related protein 2/3 complex subunit 3-A (arpc3-a) of Xenopus laevis (African clawed frog).